The primary structure comprises 554 residues: Intraflagellar transport protein 56 (554 aa).

Residues 1–27 (MMLSRAKPAVGGESPHTDKRKKKGRKI) form a disordered region. The segment covering 18-27 (DKRKKKGRKI) has biased composition (basic residues). 4 TPR repeats span residues 57-90 (DDTNLWIGYCAFHLGDYKRALEEYENATKEENCN), 92-125 (EVWVNLACTYFFLGMYKQAEAAGFKAPKSRLQNR), 151-184 (KEDQLSLASIHYMRSHYQEAIDIYKRILLDNREY), and 468-501 (ANDCYKMGQFYYSAKAFDVLERLDPNPEYWEGKR).

It belongs to the IFT56 family. Component of the IFT complex B. Interacts with IFT46; the interaction is direct. High expression detected in testis. Detected also retina, kidney, lung and brain tissue. The expression level is low in spleen. Expressed in the developing liver. Present in the airway epithelial cells and the testes (at protein level).

It localises to the cell projection. The protein localises to the cilium. Functionally, component of the intraflagellar transport (IFT) complex B required for transport of proteins in the motile cilium. Required for transport of specific ciliary cargo proteins related to motility, while it is neither required for IFT complex B assembly or motion nor for cilium assembly. Required for efficient coupling between the accumulation of GLI2 and GLI3 at the ciliary tips and their dissociation from the negative regulator SUFU. Plays a key role in maintaining the integrity of the IFT complex B and the proper ciliary localization of the IFT complex B components. Not required for IFT complex A ciliary localization or function. Essential for maintaining proper microtubule organization within the ciliary axoneme. This chain is Intraflagellar transport protein 56, found in Mus musculus (Mouse).